Here is a 242-residue protein sequence, read N- to C-terminus: Probable proteasome subunit alpha type-7 (242 aa).

The protein belongs to the peptidase T1A family. The 26S proteasome consists of a 20S proteasome core and two 19S regulatory subunits. The 20S proteasome core is composed of 28 subunits that are arranged in four stacked rings, resulting in a barrel-shaped structure. The two end rings are each formed by seven alpha subunits, and the two central rings are each formed by seven beta subunits. The catalytic chamber with the active sites is on the inside of the barrel.

It localises to the cytoplasm. The protein localises to the nucleus. In terms of biological role, the proteasome degrades poly-ubiquitinated proteins in the cytoplasm and in the nucleus. It is essential for the regulated turnover of proteins and for the removal of misfolded proteins. The proteasome is a multicatalytic proteinase complex that is characterized by its ability to cleave peptides with Arg, Phe, Tyr, Leu, and Glu adjacent to the leaving group at neutral or slightly basic pH. It has an ATP-dependent proteolytic activity. The polypeptide is Probable proteasome subunit alpha type-7 (PRE10) (Encephalitozoon cuniculi (strain GB-M1) (Microsporidian parasite)).